The primary structure comprises 266 residues: Phosphatidylglycerol--prolipoprotein diacylglyceryl transferase (266 aa).

7 helical membrane-spanning segments follow: residues 10-30 (VALAIGPLKIHWYGLMYLIGI), 56-76 (LVFWVACGVILGGRLGYVLFY), 92-112 (WKGGMSFHGGLLGVMLAVWWF), 120-140 (FFQLMDFIAPLVPIGLGAGRI), 171-191 (PSQLYQFALEGVALFVILWLF), 199-219 (ASVSGLFVLCYGIFRFVVEFV), and 233-253 (WLTMGQVLCVPMVLAGIALMV). Arg139 contributes to the a 1,2-diacyl-sn-glycero-3-phospho-(1'-sn-glycerol) binding site.

Belongs to the Lgt family.

It localises to the cell inner membrane. The catalysed reaction is L-cysteinyl-[prolipoprotein] + a 1,2-diacyl-sn-glycero-3-phospho-(1'-sn-glycerol) = an S-1,2-diacyl-sn-glyceryl-L-cysteinyl-[prolipoprotein] + sn-glycerol 1-phosphate + H(+). It participates in protein modification; lipoprotein biosynthesis (diacylglyceryl transfer). Its function is as follows. Catalyzes the transfer of the diacylglyceryl group from phosphatidylglycerol to the sulfhydryl group of the N-terminal cysteine of a prolipoprotein, the first step in the formation of mature lipoproteins. The chain is Phosphatidylglycerol--prolipoprotein diacylglyceryl transferase from Pseudomonas paraeruginosa (strain DSM 24068 / PA7) (Pseudomonas aeruginosa (strain PA7)).